A 483-amino-acid chain; its full sequence is Chromosomal replication initiator protein DnaA (483 aa).

A domain I, interacts with DnaA modulators region spans residues 1–71 (MKEFWQTCVS…EALAAEWYQR (71 aa)). A domain II region spans residues 71 to 145 (RPVQVQFELP…DAANIVYERS (75 aa)). Residues 146-362 (RLNTDLTFEN…GALRKVLAYA (217 aa)) are domain III, AAA+ region. G190, G192, K193, and T194 together coordinate ATP. The interval 363 to 483 (RFHGREALNV…LHVLEQTLKG (121 aa)) is domain IV, binds dsDNA.

It belongs to the DnaA family. Oligomerizes as a right-handed, spiral filament on DNA at oriC.

The protein resides in the cytoplasm. Plays an essential role in the initiation and regulation of chromosomal replication. ATP-DnaA binds to the origin of replication (oriC) to initiate formation of the DNA replication initiation complex once per cell cycle. Binds the DnaA box (a 9 base pair repeat at the origin) and separates the double-stranded (ds)DNA. Forms a right-handed helical filament on oriC DNA; dsDNA binds to the exterior of the filament while single-stranded (ss)DNA is stabiized in the filament's interior. The ATP-DnaA-oriC complex binds and stabilizes one strand of the AT-rich DNA unwinding element (DUE), permitting loading of DNA polymerase. After initiation quickly degrades to an ADP-DnaA complex that is not apt for DNA replication. Binds acidic phospholipids. This chain is Chromosomal replication initiator protein DnaA, found in Bordetella avium (strain 197N).